The following is a 171-amino-acid chain: UPF0260 protein Nham_1404 (171 aa).

Belongs to the UPF0260 family.

The protein is UPF0260 protein Nham_1404 of Nitrobacter hamburgensis (strain DSM 10229 / NCIMB 13809 / X14).